Consider the following 435-residue polypeptide: Ornithine decarboxylase (435 aa).

An N6-(pyridoxal phosphate)lysine modification is found at K76. Pyridoxal 5'-phosphate-binding positions include S207, G244, and 283–286 (EPGR). 339–340 (FD) serves as a coordination point for substrate. C368 serves as the catalytic Proton donor; shared with dimeric partner. D369 is a substrate binding site. Y397 is a binding site for pyridoxal 5'-phosphate.

It belongs to the Orn/Lys/Arg decarboxylase class-II family. Homodimer. Only the dimer is catalytically active, as the active sites are constructed of residues from both monomers. The cofactor is pyridoxal 5'-phosphate.

The enzyme catalyses L-ornithine + H(+) = putrescine + CO2. It participates in amine and polyamine biosynthesis; putrescine biosynthesis via L-ornithine pathway; putrescine from L-ornithine: step 1/1. Its activity is regulated as follows. Inhibited by antizyme (AZ) in response to polyamine levels. AZ inhibits the assembly of the functional homodimer by binding to ODC monomers and targeting them for ubiquitin-independent proteolytic destruction by the 26S proteasome. Catalyzes the first and rate-limiting step of polyamine biosynthesis that converts ornithine into putrescine, which is the precursor for the polyamines, spermidine and spermine. Polyamines are essential for cell proliferation and are implicated in cellular processes, ranging from DNA replication to apoptosis. This Panagrellus redivivus (Microworm) protein is Ornithine decarboxylase (ODC).